We begin with the raw amino-acid sequence, 105 residues long: Nucleoid-associated protein lin2851 (105 aa).

Residues 1 to 16 are compositionally biased toward low complexity; the sequence is MRGMGNMQGMMKQMQK. The tract at residues 1–23 is disordered; sequence MRGMGNMQGMMKQMQKMQKEMAK.

Belongs to the YbaB/EbfC family. In terms of assembly, homodimer.

Its subcellular location is the cytoplasm. The protein localises to the nucleoid. Functionally, binds to DNA and alters its conformation. May be involved in regulation of gene expression, nucleoid organization and DNA protection. In Listeria innocua serovar 6a (strain ATCC BAA-680 / CLIP 11262), this protein is Nucleoid-associated protein lin2851.